Consider the following 80-residue polypeptide: Keratin-associated protein 6-1 (80 aa).

The protein belongs to the KRTAP type 6 family. As to quaternary structure, interacts with hair keratins.

Functionally, in the hair cortex, hair keratin intermediate filaments are embedded in an interfilamentous matrix, consisting of hair keratin-associated proteins (KRTAP), which are essential for the formation of a rigid and resistant hair shaft through their extensive disulfide bond cross-linking with abundant cysteine residues of hair keratins. The matrix proteins include the high-sulfur and high-glycine-tyrosine keratins. The protein is Keratin-associated protein 6-1 (KRTAP6-1) of Oryctolagus cuniculus (Rabbit).